The following is a 472-amino-acid chain: 3-isopropylmalate dehydratase large subunit (472 aa).

3 residues coordinate [4Fe-4S] cluster: cysteine 350, cysteine 411, and cysteine 414.

Belongs to the aconitase/IPM isomerase family. LeuC type 1 subfamily. Heterodimer of LeuC and LeuD. [4Fe-4S] cluster is required as a cofactor.

It catalyses the reaction (2R,3S)-3-isopropylmalate = (2S)-2-isopropylmalate. It participates in amino-acid biosynthesis; L-leucine biosynthesis; L-leucine from 3-methyl-2-oxobutanoate: step 2/4. Catalyzes the isomerization between 2-isopropylmalate and 3-isopropylmalate, via the formation of 2-isopropylmaleate. The protein is 3-isopropylmalate dehydratase large subunit of Alcanivorax borkumensis (strain ATCC 700651 / DSM 11573 / NCIMB 13689 / SK2).